The primary structure comprises 403 residues: Aspartate aminotransferase, cytoplasmic isozyme 2 (403 aa).

An N-acetylmethionine modification is found at methionine 1. Positions 37, 132, and 185 each coordinate L-aspartate. Residue lysine 249 is modified to N6-(pyridoxal phosphate)lysine. L-aspartate is bound at residue arginine 377.

Belongs to the class-I pyridoxal-phosphate-dependent aminotransferase family. In terms of assembly, homodimer. Pyridoxal 5'-phosphate serves as cofactor.

It is found in the cytoplasm. It carries out the reaction L-aspartate + 2-oxoglutarate = oxaloacetate + L-glutamate. In terms of biological role, important for the metabolism of amino acids and Krebs-cycle related organic acids. In plants, it is involved in nitrogen metabolism and in aspects of carbon and energy metabolism. The chain is Aspartate aminotransferase, cytoplasmic isozyme 2 (ASP4) from Arabidopsis thaliana (Mouse-ear cress).